Consider the following 102-residue polypeptide: MEMKKWSYANLITLALLFLFFIILLLAFQGGSRDDDHQHVHVAIRTKDISMGRKLKSLKPINPTKKNGFEYPDQGSHDVQEREVYVELRDYGQRKYKPPVHN.

Residues 1–27 (MEMKKWSYANLITLALLFLFFIILLLA) form the signal peptide. Positions 28–89 (FQGGSRDDDH…QEREVYVELR (62 aa)) are excised as a propeptide. The disordered stretch occupies residues 56–78 (KSLKPINPTKKNGFEYPDQGSHD). Y91 is modified (sulfotyrosine). P99 carries the post-translational modification Hydroxyproline.

Belongs to the RGF family. Binds to LRR receptor-like serine/threonine-protein kinases to trigger their dimerization with SERK proteins and subsequent signaling. As to expression, expressed in roots and sepals.

It localises to the secreted. In terms of biological role, signaling peptide (root growth factor) that promotes root hairs formation and growth. Maintains the postembryonic root stem cell niche. Regulates the pattern of root growth and lateral root development by modulating the length and the number of cortical cells in the root apical meristem (RAM), and the anticlinal asymmetric cell divisions in lateral root initiation cells. The protein is Protein GOLVEN 4 of Arabidopsis thaliana (Mouse-ear cress).